Consider the following 285-residue polypeptide: Cytosolic Fe-S cluster assembly factor CFD1 (285 aa).

Residue G30–S37 coordinates ATP. C206 and C209 together coordinate [4Fe-4S] cluster.

The protein belongs to the Mrp/NBP35 ATP-binding proteins family. NUBP2/CFD1 subfamily. As to quaternary structure, heterotetramer of 2 NBP35 and 2 CFD1 chains. It depends on [4Fe-4S] cluster as a cofactor.

It localises to the cytoplasm. Functionally, component of the cytosolic iron-sulfur (Fe/S) protein assembly (CIA) machinery. Required for maturation of extramitochondrial Fe-S proteins. The NBP35-CFD1 heterotetramer forms a Fe-S scaffold complex, mediating the de novo assembly of an Fe-S cluster and its transfer to target apoproteins. Required for biogenesis and export of both ribosomal subunits, which may reflect a role in assembly of the Fe/S clusters in RLI1, a protein which performs rRNA processing and ribosome export. This Candida glabrata (strain ATCC 2001 / BCRC 20586 / JCM 3761 / NBRC 0622 / NRRL Y-65 / CBS 138) (Yeast) protein is Cytosolic Fe-S cluster assembly factor CFD1.